The chain runs to 1066 residues: Phosphatidylinositol 4-kinase PIK1 (1066 aa).

One can recognise a PIK helical domain in the interval 1–133; the sequence is MHKASSSKKS…GFQVARRVLN (133 aa). Phosphoserine occurs at positions 10 and 236. Disordered stretches follow at residues 218–240, 303–411, and 564–624; these read KKTS…PIDL, DGKN…KKAN, and NENR…LGDM. A compositionally biased stretch (acidic residues) spans 342–356; the sequence is NNEDETGGETEEDAD. Composition is skewed to polar residues over residues 374–411 and 570–597; these read QPRT…KKAN and STLT…NEGL. Serine 384 is subject to Phosphoserine. A Phosphothreonine modification is found at threonine 394. Phosphoserine is present on residues serine 396 and serine 592. Residues 598 to 609 show a composition bias toward low complexity; that stretch reads SSTSRSDSASTA. Residues 770-1049 form the PI3K/PI4K catalytic domain; sequence ATKKERIRKT…FLIGKSLGSI (280 aa). Residues 776–782 form a G-loop region; it reads IRKTSEY. Residues 915 to 923 are catalytic loop; that stretch reads QVKDRHNGN. The tract at residues 934-958 is activation loop; the sequence is HIDFGFMLSNSPGSVGFEAAPFKLT.

This sequence belongs to the PI3/PI4-kinase family. Type III PI4K subfamily. As to quaternary structure, interacts with FRQ1.

Its subcellular location is the nucleus. It localises to the golgi apparatus. It is found in the trans-Golgi network. It catalyses the reaction a 1,2-diacyl-sn-glycero-3-phospho-(1D-myo-inositol) + ATP = a 1,2-diacyl-sn-glycero-3-phospho-(1D-myo-inositol 4-phosphate) + ADP + H(+). Its function is as follows. Acts on phosphatidylinositol (PI) in the first committed step in the production of the second messenger inositol 1,4,5,-trisphosphate. PIK1 is part of a nuclear phosphoinositide cycle and could control cytokinesis through the actin cytoskeleton. Involved in the response to mating pheromone. The protein is Phosphatidylinositol 4-kinase PIK1 of Saccharomyces cerevisiae (strain ATCC 204508 / S288c) (Baker's yeast).